Here is a 359-residue protein sequence, read N- to C-terminus: Archaemetzincin-2 (359 aa).

Histidine 254 provides a ligand contact to Zn(2+). The active-site Proton acceptor is glutamate 255. Positions 258, 264, 265, 270, 289, and 292 each coordinate Zn(2+).

It belongs to the peptidase M54 family. Requires Zn(2+) as cofactor. In terms of tissue distribution, predominantly expressed in testis.

Functionally, probable zinc metalloprotease. The protein is Archaemetzincin-2 (Amz2) of Mus musculus (Mouse).